We begin with the raw amino-acid sequence, 874 residues long: Bifunctional uridylyltransferase/uridylyl-removing enzyme (874 aa).

The tract at residues 1-336 (MIDTSTITNP…DNGKTVETIQ (336 aa)) is uridylyltransferase. The interval 337–695 (LSDDFQIRGH…LSKKATRGGT (359 aa)) is uridylyl-removing. Positions 455 to 577 (VDEHSVRLIK…VRDEERLDYL (123 aa)) constitute an HD domain. ACT domains lie at 696-779 (EVFV…RAPR) and 802-874 (TMEL…TPQD).

This sequence belongs to the GlnD family. Requires Mg(2+) as cofactor.

The enzyme catalyses [protein-PII]-L-tyrosine + UTP = [protein-PII]-uridylyl-L-tyrosine + diphosphate. The catalysed reaction is [protein-PII]-uridylyl-L-tyrosine + H2O = [protein-PII]-L-tyrosine + UMP + H(+). Its activity is regulated as follows. Uridylyltransferase (UTase) activity is inhibited by glutamine, while glutamine activates uridylyl-removing (UR) activity. Functionally, modifies, by uridylylation and deuridylylation, the PII regulatory proteins (GlnB and homologs), in response to the nitrogen status of the cell that GlnD senses through the glutamine level. Under low glutamine levels, catalyzes the conversion of the PII proteins and UTP to PII-UMP and PPi, while under higher glutamine levels, GlnD hydrolyzes PII-UMP to PII and UMP (deuridylylation). Thus, controls uridylylation state and activity of the PII proteins, and plays an important role in the regulation of nitrogen assimilation and metabolism. The polypeptide is Bifunctional uridylyltransferase/uridylyl-removing enzyme (Photobacterium profundum (strain SS9)).